The chain runs to 338 residues: N-acetyl-gamma-glutamyl-phosphate reductase (338 aa).

The active site involves cysteine 148.

The protein belongs to the NAGSA dehydrogenase family. Type 1 subfamily.

The protein resides in the cytoplasm. The enzyme catalyses N-acetyl-L-glutamate 5-semialdehyde + phosphate + NADP(+) = N-acetyl-L-glutamyl 5-phosphate + NADPH + H(+). Its pathway is amino-acid biosynthesis; L-arginine biosynthesis; N(2)-acetyl-L-ornithine from L-glutamate: step 3/4. Catalyzes the NADPH-dependent reduction of N-acetyl-5-glutamyl phosphate to yield N-acetyl-L-glutamate 5-semialdehyde. This Leptospira interrogans serogroup Icterohaemorrhagiae serovar copenhageni (strain Fiocruz L1-130) protein is N-acetyl-gamma-glutamyl-phosphate reductase.